Consider the following 558-residue polypeptide: CTP synthase (558 aa).

The segment at 1 to 267 (MAKFVFVTGG…CLEMLDVLNL (267 aa)) is amidoligase domain. S13 is a CTP binding site. S13 contributes to the UTP binding site. Residues 14 to 19 (SIGKGI) and D71 contribute to the ATP site. 2 residues coordinate Mg(2+): D71 and E141. CTP-binding positions include 148–150 (DIE), 188–193 (KTKPTQ), and K224. Residues 188-193 (KTKPTQ) and K224 each bind UTP. The 243-residue stretch at 292–534 (KVALVGKYVQ…IEAAQLRLPA (243 aa)) folds into the Glutamine amidotransferase type-1 domain. G354 contributes to the L-glutamine binding site. Catalysis depends on C381, which acts as the Nucleophile; for glutamine hydrolysis. Residues 382–385 (LGMQ), E405, and R462 contribute to the L-glutamine site. Catalysis depends on residues H507 and E509. The tract at residues 536-558 (PDEALRRQSQTNISAQEQPSRIG) is disordered. Residues 542-558 (RQSQTNISAQEQPSRIG) are compositionally biased toward polar residues.

Belongs to the CTP synthase family. In terms of assembly, homotetramer.

The catalysed reaction is UTP + L-glutamine + ATP + H2O = CTP + L-glutamate + ADP + phosphate + 2 H(+). It carries out the reaction L-glutamine + H2O = L-glutamate + NH4(+). It catalyses the reaction UTP + NH4(+) + ATP = CTP + ADP + phosphate + 2 H(+). The protein operates within pyrimidine metabolism; CTP biosynthesis via de novo pathway; CTP from UDP: step 2/2. With respect to regulation, allosterically activated by GTP, when glutamine is the substrate; GTP has no effect on the reaction when ammonia is the substrate. The allosteric effector GTP functions by stabilizing the protein conformation that binds the tetrahedral intermediate(s) formed during glutamine hydrolysis. Inhibited by the product CTP, via allosteric rather than competitive inhibition. Functionally, catalyzes the ATP-dependent amination of UTP to CTP with either L-glutamine or ammonia as the source of nitrogen. Regulates intracellular CTP levels through interactions with the four ribonucleotide triphosphates. This Prochlorococcus marinus (strain MIT 9313) protein is CTP synthase.